A 261-amino-acid chain; its full sequence is Ribosomal RNA small subunit methyltransferase J (261 aa).

S-adenosyl-L-methionine is bound by residues R101 to D102, E117 to R118, S153 to S154, and D176.

The protein belongs to the methyltransferase superfamily. RsmJ family.

Its subcellular location is the cytoplasm. The enzyme catalyses guanosine(1516) in 16S rRNA + S-adenosyl-L-methionine = N(2)-methylguanosine(1516) in 16S rRNA + S-adenosyl-L-homocysteine + H(+). Functionally, specifically methylates the guanosine in position 1516 of 16S rRNA. This is Ribosomal RNA small subunit methyltransferase J from Vibrio cholerae serotype O1 (strain ATCC 39315 / El Tor Inaba N16961).